The following is a 358-amino-acid chain: MILSIESSCDDSSLALMSINDASLLYHIKLSQDEEHSTYGGIVPEIASRLHAQRLPEILKKLKAFLNNDLSPIKAVAVTTRPGLSVTLIEGLMMAKALCLGLQVPLICVNHLKGHIYSLLIHKATSDMQAILPKNTSLPQPLGILLVSGGHTQILHMRDFNAISLIAQSLDDSFGESFDKVAKYLGLGYPGGPVIESYATTFMRDFPHIAPHSFPVPLLHNQKLQFSFSGLKNAVRLAIQALPQPLSLKDRGSICAGFQQSACEHIVRKVRLYFQSAQAQDLEHFAIVGGASANTYLRTTLNELCEEYNKQLHLADLAFCADNAAMIGVCAIEHYKRGDFTPIDEAQISPKSLLNDFL.

Histidine 111 and histidine 115 together coordinate Fe cation. Substrate is bound by residues 146–150 (LVSGG), aspartate 179, glycine 192, and asparagine 294. Aspartate 322 contacts Fe cation.

The protein belongs to the KAE1 / TsaD family. It depends on Fe(2+) as a cofactor.

It localises to the cytoplasm. The catalysed reaction is L-threonylcarbamoyladenylate + adenosine(37) in tRNA = N(6)-L-threonylcarbamoyladenosine(37) in tRNA + AMP + H(+). In terms of biological role, required for the formation of a threonylcarbamoyl group on adenosine at position 37 (t(6)A37) in tRNAs that read codons beginning with adenine. Is involved in the transfer of the threonylcarbamoyl moiety of threonylcarbamoyl-AMP (TC-AMP) to the N6 group of A37, together with TsaE and TsaB. TsaD likely plays a direct catalytic role in this reaction. This is tRNA N6-adenosine threonylcarbamoyltransferase from Helicobacter hepaticus (strain ATCC 51449 / 3B1).